The following is a 176-amino-acid chain: bZIP transcription factor 8 (176 aa).

The segment at 44–101 (PNTSGGSDESMSDGSKIDPKRSPKYLEKRMKNNEAAKKSRASRKHREQKNQTENELLK) is disordered. Low complexity predominate over residues 47–57 (SGGSDESMSDG). The segment covering 58-80 (SKIDPKRSPKYLEKRMKNNEAAK) has biased composition (basic and acidic residues). The 64-residue stretch at 65–128 (SPKYLEKRMK…AQMQITIRDM (64 aa)) folds into the bZIP domain. Residues 67 to 92 (KYLEKRMKNNEAAKKSRASRKHREQK) form a basic motif region. Positions 81–90 (KSRASRKHRE) are enriched in basic residues. Residues 91–101 (QKNQTENELLK) are compositionally biased toward basic and acidic residues. Positions 100–107 (LKRKNAAL) are leucine-zipper.

This sequence belongs to the bZIP family.

The chain is bZIP transcription factor 8 (zip-8) from Caenorhabditis elegans.